The following is a 178-amino-acid chain: CASP-like protein 4D1 (178 aa).

Alanine 2 is modified (N-acetylalanine). At 2–14 (APPPPAPPSVTLR) the chain is on the cytoplasmic side. The chain crosses the membrane as a helical span at residues 15–35 (TVLLLLRVLTAAFLLITVVLI). Residues 36 to 60 (STNTVTLEISSTSIKLPFNDVYAYR) are Extracellular-facing. The helical transmembrane segment at 61 to 81 (YMLSAAVIGLVYAVVQLFLTI) threads the bilayer. Over 82–97 (SQFATGKTHPLTYQFD) the chain is Cytoplasmic. A helical membrane pass occupies residues 98–118 (FYGDKVISYLLATGSAAGFGV). Residues 119–149 (SKDLKDTYIALIEFDSTDPVDKFFSKGYASA) lie on the Extracellular side of the membrane. The helical transmembrane segment at 150 to 170 (SLLLFAFVSLAVLSVFSSLAL) threads the bilayer. The Cytoplasmic segment spans residues 171–178 (SKRPVPVS).

Belongs to the Casparian strip membrane proteins (CASP) family. In terms of assembly, homodimer and heterodimers. As to expression, expressed in the root epidermis.

It localises to the cell membrane. The protein is CASP-like protein 4D1 of Arabidopsis thaliana (Mouse-ear cress).